Reading from the N-terminus, the 90-residue chain is Guanine nucleotide-binding protein subunit gamma (90 aa).

A lipid anchor (S-palmitoyl cysteine) is attached at Cys-86. Position 87 is a cysteine methyl ester (Cys-87). The S-farnesyl cysteine moiety is linked to residue Cys-87. The propeptide at 88-90 (CIM) is removed in mature form.

Belongs to the G protein gamma family. G proteins are composed of 3 units, alpha, beta and gamma.

Its subcellular location is the membrane. This is Guanine nucleotide-binding protein subunit gamma from Eremothecium gossypii (strain ATCC 10895 / CBS 109.51 / FGSC 9923 / NRRL Y-1056) (Yeast).